A 452-amino-acid chain; its full sequence is UDP-glycosyltransferase 76E4 (452 aa).

UDP-alpha-D-glucose is bound by residues threonine 274, 333–335, 350–358, and 372–375; these read APQ, HCGWNSTLE, and QGEQ.

It belongs to the UDP-glycosyltransferase family.

The sequence is that of UDP-glycosyltransferase 76E4 (UGT76E4) from Arabidopsis thaliana (Mouse-ear cress).